The primary structure comprises 405 residues: MPEPVAEPALNGLRLNLRIVSIVMFNFASYLTIGLPLAVLPGYVHDAMGFSAFWAGLIISLQYFATLLSRPHAGRYADVLGPKKIVVFGLCGCFLSGLGYLLADIASAWPMISLLLLGLGRVILGIGQSFAGTGSTLWGVGVVGSLHIGRVISWNGIVTYGAMAMGAPLGVLCYAWGGLQGLALTVMGVALLAVLLALPRPSVKANKGKPLPFRAVLGRVWLYGMALALASAGFGVIATFITLFYDAKGWDGAAFALTLFSVAFVGTRLLFPNGINRLGGLNVAMICFGVEIIGLLLVGTAAMPWMAKIGVLLTGMGFSLVFPALGVVAVKAVPPQNQGAALATYTVFMDMSLGVTGPLAGLVMTWAGVPVIYLAAAGLVAMALLLTWRLKKRPPSALPEAASSS.

Helical transmembrane passes span 19–39, 48–68, 85–105, 106–126, 129–149, 156–176, 178–198, 224–244, 252–272, 283–303, 309–329, 344–364, and 366–386; these read IVSIVMFNFASYLTIGLPLAV, MGFSAFWAGLIISLQYFATLL, IVVFGLCGCFLSGLGYLLADI, ASAWPMISLLLLGLGRVILGI, SFAGTGSTLWGVGVVGSLHIG, GIVTYGAMAMGAPLGVLCYAW, GLQGLALTVMGVALLAVLLAL, GMALALASAGFGVIATFITLF, GAAFALTLFSVAFVGTRLLFP, VAMICFGVEIIGLLLVGTAAM, IGVLLTGMGFSLVFPALGVVA, TYTVFMDMSLGVTGPLAGLVM, and WAGVPVIYLAAAGLVAMALLL.

This sequence belongs to the major facilitator superfamily. YhhS family.

The protein localises to the cell inner membrane. This is an uncharacterized protein from Salmonella enteritidis PT4 (strain P125109).